The primary structure comprises 431 residues: Na(+)/H(+) antiporter NhaA 1 (431 aa).

11 consecutive transmembrane segments (helical) span residues 17-37 (LSGI…NSNF), 56-76 (FIIS…LFFL), 98-118 (MFPF…YIAL), 123-143 (FIGF…MLIL), 154-174 (LFLV…VATV), 182-202 (EYFL…YFDV), 209-229 (LFLG…ATIA), 301-321 (FSAF…LLDF), 329-349 (MIVL…IFGF), 373-393 (VGFI…LAFI), and 400-420 (AIKI…MILI).

This sequence belongs to the NhaA Na(+)/H(+) (TC 2.A.33) antiporter family.

The protein resides in the cell inner membrane. The enzyme catalyses Na(+)(in) + 2 H(+)(out) = Na(+)(out) + 2 H(+)(in). Its function is as follows. Na(+)/H(+) antiporter that extrudes sodium in exchange for external protons. The protein is Na(+)/H(+) antiporter NhaA 1 of Aliarcobacter butzleri (strain RM4018) (Arcobacter butzleri).